Here is a 206-residue protein sequence, read N- to C-terminus: Small ribosomal subunit protein uS4 (206 aa).

One can recognise an S4 RNA-binding domain in the interval 96–156 (GRLDNVVYRM…EKAKKQSRVK (61 aa)).

This sequence belongs to the universal ribosomal protein uS4 family. In terms of assembly, part of the 30S ribosomal subunit. Contacts protein S5. The interaction surface between S4 and S5 is involved in control of translational fidelity.

Its function is as follows. One of the primary rRNA binding proteins, it binds directly to 16S rRNA where it nucleates assembly of the body of the 30S subunit. With S5 and S12 plays an important role in translational accuracy. The sequence is that of Small ribosomal subunit protein uS4 from Salmonella agona (strain SL483).